Consider the following 90-residue polypeptide: UPF0297 protein LVIS_1222 (90 aa).

Belongs to the UPF0297 family.

This Levilactobacillus brevis (strain ATCC 367 / BCRC 12310 / CIP 105137 / JCM 1170 / LMG 11437 / NCIMB 947 / NCTC 947) (Lactobacillus brevis) protein is UPF0297 protein LVIS_1222.